The primary structure comprises 472 residues: Membrane-bound lytic murein transglycosylase F (472 aa).

An N-terminal signal peptide occupies residues 1 to 24 (MRLLVIFLLALLLMACKEAPKPLA). Positions 25–259 (DPRTTKEIIV…HLIDRYYGHA (235 aa)) are non-LT domain. Residues 260–472 (DRLKPVDVTT…NGFGNTLSQE (213 aa)) are LT domain. The active site involves glutamate 306.

The protein in the N-terminal section; belongs to the bacterial solute-binding protein 3 family. This sequence in the C-terminal section; belongs to the transglycosylase Slt family.

The protein localises to the cell outer membrane. The catalysed reaction is Exolytic cleavage of the (1-&gt;4)-beta-glycosidic linkage between N-acetylmuramic acid (MurNAc) and N-acetylglucosamine (GlcNAc) residues in peptidoglycan, from either the reducing or the non-reducing ends of the peptidoglycan chains, with concomitant formation of a 1,6-anhydrobond in the MurNAc residue.. In terms of biological role, murein-degrading enzyme that degrades murein glycan strands and insoluble, high-molecular weight murein sacculi, with the concomitant formation of a 1,6-anhydromuramoyl product. Lytic transglycosylases (LTs) play an integral role in the metabolism of the peptidoglycan (PG) sacculus. Their lytic action creates space within the PG sacculus to allow for its expansion as well as for the insertion of various structures such as secretion systems and flagella. The sequence is that of Membrane-bound lytic murein transglycosylase F from Methylobacillus flagellatus (strain ATCC 51484 / DSM 6875 / VKM B-1610 / KT).